Here is a 643-residue protein sequence, read N- to C-terminus: Transmembrane 9 superfamily member 4 (643 aa).

An N-terminal signal peptide occupies residues 1 to 23 (MAAAMIWWPRFLLLLCLTCKGST). Over 24 to 282 (FYVPGVAPIN…TMSDVQIHWF (259 aa)) the chain is Extracellular. Residues 283 to 303 (SIINSVVVVFFLSGILSMIII) form a helical membrane-spanning segment. Residues 304–347 (RTLRKDIANYNKEDDIEDTMEESGWKLVHGDVFRPPQYPMILSS) are Cytoplasmic-facing. At Y313 the chain carries Phosphotyrosine. A helical membrane pass occupies residues 348 to 368 (LLGSGIQLFCMILIVIFVAML). Residues 369–377 (GMLSPSSRG) are Extracellular-facing. Residues 378 to 398 (ALMTTACFLFMFMGVFGGFSA) traverse the membrane as a helical segment. Topologically, residues 399–417 (GRLYRTLKGHRWKKGAFCT) are cytoplasmic. Residues 418–438 (ATLYPGVVFGICFVLNCFIWG) form a helical membrane-spanning segment. The Extracellular portion of the chain corresponds to 439–450 (KHSSGAVPFPTM). A helical membrane pass occupies residues 451–471 (VALLCMWFGISLPLVYLGYYF). The Cytoplasmic segment spans residues 472–502 (GFRKQPYDNPVRTNQIPRQIPEQRWYMNRFV). A helical membrane pass occupies residues 503–523 (GILMAGILPFGAMFIELFFIF). Over 524 to 536 (SAIWENQFYYLFG) the chain is Extracellular. The helical transmembrane segment at 537–557 (FLFLVFIILVVSCSQISIVMV) threads the bilayer. At 558–571 (YFQLCAEDYRWWWR) the chain is on the cytoplasmic side. Residues 572-592 (NFLVSGGSAFYVLVYAIFYFV) traverse the membrane as a helical segment. The Extracellular segment spans residues 593-599 (NKLDIVE). The helical transmembrane segment at 600 to 620 (FIPSLLYFGYTTLMVLSFWLL) threads the bilayer. The Cytoplasmic segment spans residues 621 to 643 (TGTIGFYAAYMFVRKIYAAVKID).

The protein belongs to the nonaspanin (TM9SF) (TC 9.A.2) family.

Its subcellular location is the membrane. It localises to the golgi apparatus. The protein resides in the early endosome. Its function is as follows. Associates with proteins harboring glycine-rich transmembrane domains and ensures their efficient localization to the cell surface. This Mus musculus (Mouse) protein is Transmembrane 9 superfamily member 4 (Tm9sf4).